The chain runs to 443 residues: Histone deacetylase 10, chloroplastic (443 aa).

The transit peptide at 1–65 (MEQLWVPSLP…PSHNGTSISD (65 aa)) directs the protein to the chloroplast. A histone deacetylase region spans residues 82–412 (DAHILYCTSP…FRAFLGEPSL (331 aa)). His-222 acts as the Proton donor/acceptor in catalysis. Residues Asp-259, His-261, and Asp-346 each coordinate Zn(2+).

The protein belongs to the histone deacetylase family. It depends on Zn(2+) as a cofactor. Expressed in leaves. Expressed in coleoptiles, leaves, flag leaves and flowers. Expressed at low levels in roots.

Its subcellular location is the plastid. It is found in the chloroplast. The protein resides in the mitochondrion. The enzyme catalyses N-acetylserotonin + H2O = serotonin + acetate. It carries out the reaction N-acetyltyramine + H2O = tyramine + acetate. It catalyses the reaction N-acetyltryptamine + H2O = tryptamine + acetate. The catalysed reaction is melatonin + H2O = 5-methoxytryptamine + acetate. The activity of this enzyme is not inhibited by butyrate, a well-known histone deacetylase inhibitor. Involved in the regulation of melatonin biosynthesis by catalyzing the deacetylation of N-acetylserotonin to produce serotonin. N-acetylserotonin is methylated by acetylserotonin O-methyltransferase (ASMT) to produce melatonin (N-acetyl-5-methoxytryptamine). Deacetylates melatonin to produce 5-methoxytryptamine. In vitro, deacetylates N-acetyltyramine and N-acetyltryptamine to produce tyramine and tryptamine, respectively. This is Histone deacetylase 10, chloroplastic from Oryza sativa subsp. japonica (Rice).